A 580-amino-acid chain; its full sequence is Trafficking protein particle complex subunit 14 (580 aa).

Disordered regions lie at residues 90 to 138 (GMPG…ATTL) and 480 to 533 (VSHP…RSGS). Gly residues predominate over residues 105–116 (PGGGDPGGGGLF). Positions 124-137 (THGPGPATSGGATT) are enriched in low complexity. Position 491 is a phosphoserine (S491). The segment covering 492-502 (RKSSPSSPAVR) has biased composition (low complexity). Residues 512–525 (LGRSQSFSHQQPSR) show a composition bias toward polar residues. S517 carries the phosphoserine modification. T541 bears the Phosphothreonine mark. S546 carries the phosphoserine modification.

In terms of assembly, component of the multisubunit TRAPP II complex, which includes at least TRAPPC1, TRAPPC2, TRAPPC2L, TRAPPC3, TRAPPC4, TRAPPC5, TRAPPC6A/B, TRAPPC9, TRAPPC10 and TRAPPC14. TRAPPC9, TRAPPC10 and TRAPPC14 are specific subunits of the TRAPP II complex. Interacts with alpha-tubulin during mitosis. Interacts with RAB3IP (via the N-terminal region); this interaction mediates RAB3IP association with the TRAPP II complex. Interacts with TRAPPC10. Interacts with FBF1. In terms of tissue distribution, broadly expressed. High levels in brain, cerebellum, testis and whole blood.

The protein resides in the cytoplasm. The protein localises to the cytoskeleton. It localises to the spindle. Its subcellular location is the vesicle. It is found in the midbody. Specific subunit of the TRAPP (transport protein particle) II complex, a highly conserved vesicle tethering complex that functions in late Golgi trafficking as a membrane tether. TRAPP II complex also has GEF activity toward RAB1A. TRAPPC14 is dispensable for TRAPPII complex integrity but mediates RAB3IP preciliary vesicle trafficking to the mother centriole during ciliogenesis. Modulates YAP1 activity as transcriptional regulator. The chain is Trafficking protein particle complex subunit 14 from Homo sapiens (Human).